The following is an 899-amino-acid chain: Protein translocase subunit SecA (899 aa).

ATP-binding positions include Gln-87, 105–109 (GEGKT), and Asp-516. Residues Cys-884, Cys-886, Cys-895, and His-896 each coordinate Zn(2+).

Belongs to the SecA family. As to quaternary structure, monomer and homodimer. Part of the essential Sec protein translocation apparatus which comprises SecA, SecYEG and auxiliary proteins SecDF. Other proteins may also be involved. Requires Zn(2+) as cofactor.

It is found in the cell inner membrane. It localises to the cytoplasm. It carries out the reaction ATP + H2O + cellular proteinSide 1 = ADP + phosphate + cellular proteinSide 2.. In terms of biological role, part of the Sec protein translocase complex. Interacts with the SecYEG preprotein conducting channel. Has a central role in coupling the hydrolysis of ATP to the transfer of proteins into and across the cell membrane, serving as an ATP-driven molecular motor driving the stepwise translocation of polypeptide chains across the membrane. This chain is Protein translocase subunit SecA, found in Borreliella burgdorferi (strain ZS7) (Borrelia burgdorferi).